The following is a 174-amino-acid chain: Peptide methionine sulfoxide reductase MsrA (174 aa).

Cys-11 is an active-site residue.

It belongs to the MsrA Met sulfoxide reductase family.

The catalysed reaction is L-methionyl-[protein] + [thioredoxin]-disulfide + H2O = L-methionyl-(S)-S-oxide-[protein] + [thioredoxin]-dithiol. It carries out the reaction [thioredoxin]-disulfide + L-methionine + H2O = L-methionine (S)-S-oxide + [thioredoxin]-dithiol. In terms of biological role, has an important function as a repair enzyme for proteins that have been inactivated by oxidation. Catalyzes the reversible oxidation-reduction of methionine sulfoxide in proteins to methionine. The sequence is that of Peptide methionine sulfoxide reductase MsrA from Pasteurella multocida (strain Pm70).